The primary structure comprises 85 residues: Toxin BmKaTx10 (85 aa).

The N-terminal stretch at 1 to 19 (MNYLVMVSFALLLMTGVES) is a signal peptide. Residues 21–83 (RDGYIALPHN…VPIRVPGRCH (63 aa)) enclose the LCN-type CS-alpha/beta domain. 4 disulfide bridges follow: C31/C82, C35/C55, C41/C65, and C45/C67.

It belongs to the long (4 C-C) scorpion toxin superfamily. Sodium channel inhibitor family. Alpha subfamily. Expressed by the venom gland.

Its subcellular location is the secreted. Alpha toxins bind voltage-independently at site-3 of sodium channels (Nav) and inhibit the inactivation of the activated channels, thereby blocking neuronal transmission. The sequence is that of Toxin BmKaTx10 from Olivierus martensii (Manchurian scorpion).